Consider the following 546-residue polypeptide: Chaperonin GroEL (546 aa).

ATP is bound by residues 29 to 32, Lys50, 86 to 90, Gly414, and Asp492; these read TMGP and DGTTT.

This sequence belongs to the chaperonin (HSP60) family. Forms a cylinder of 14 subunits composed of two heptameric rings stacked back-to-back. Interacts with the co-chaperonin GroES.

Its subcellular location is the cytoplasm. The catalysed reaction is ATP + H2O + a folded polypeptide = ADP + phosphate + an unfolded polypeptide.. Its function is as follows. Together with its co-chaperonin GroES, plays an essential role in assisting protein folding. The GroEL-GroES system forms a nano-cage that allows encapsulation of the non-native substrate proteins and provides a physical environment optimized to promote and accelerate protein folding. This is Chaperonin GroEL from Helicobacter pylori (strain Shi470).